Reading from the N-terminus, the 732-residue chain is Putative pectinesterase/pectinesterase inhibitor 28 (732 aa).

The chain crosses the membrane as a helical span at residues 17 to 37; sequence VIISISSVLLISMVVAVTIGV. 4 N-linked (GlcNAc...) asparagine glycosylation sites follow: Asn40, Asn93, Asn278, and Asn297. The interval 51–204 is pectinesterase inhibitor 28; it reads TTSVKAIKDV…VQLTHNGLAM (154 aa). Positions 252–548 are pectinesterase 28; the sequence is DIVVAQDGSG…FTPAQYIQGD (297 aa). Residues Thr327 and Gln357 each contribute to the substrate site. The active-site Proton donor; for pectinesterase activity is Asp380. The cysteines at positions 394 and 414 are disulfide-linked. The active-site Nucleophile; for pectinesterase activity is the Asp401. An N-linked (GlcNAc...) asparagine glycan is attached at Asn413. Arg469 and Trp471 together coordinate substrate. N-linked (GlcNAc...) asparagine glycosylation is found at Asn566, Asn570, and Asn581. 2 stretches are compositionally biased toward low complexity: residues 570 to 620 and 633 to 732; these read NSTV…PSTS and PSMV…SSIG. The disordered stretch occupies residues 570–732; the sequence is NSTVTGSSLS…PSASPQSSIG (163 aa).

In the N-terminal section; belongs to the PMEI family. It in the C-terminal section; belongs to the pectinesterase family. Expressed in flower buds.

It is found in the membrane. It carries out the reaction [(1-&gt;4)-alpha-D-galacturonosyl methyl ester](n) + n H2O = [(1-&gt;4)-alpha-D-galacturonosyl](n) + n methanol + n H(+). It functions in the pathway glycan metabolism; pectin degradation; 2-dehydro-3-deoxy-D-gluconate from pectin: step 1/5. Functionally, acts in the modification of cell walls via demethylesterification of cell wall pectin. The protein is Putative pectinesterase/pectinesterase inhibitor 28 (PME28) of Arabidopsis thaliana (Mouse-ear cress).